A 77-amino-acid polypeptide reads, in one-letter code: MAVGISPGELRELTDDELTERLRESKEELFNLRFQMATGQLTNNRRLRTVRQEIARVYTVLRERELGLASGPDGKES.

This sequence belongs to the universal ribosomal protein uL29 family.

In Mycobacterium avium (strain 104), this protein is Large ribosomal subunit protein uL29.